A 561-amino-acid polypeptide reads, in one-letter code: Zinc finger protein with KRAB and SCAN domains 1 (561 aa).

The interval 1 to 51 (MMTAESRETTGLSPQAAQEKDGIVIVKVEEEDEEDHMWGQDSSLQETPPPD) is disordered. Ser-13 bears the Phosphoserine mark. Residue Lys-27 forms a Glycyl lysine isopeptide (Lys-Gly) (interchain with G-Cter in SUMO2) linkage. Residues 56–138 (RQRFRRFCYQ…TLLEDLELDL (83 aa)) enclose the SCAN box domain. The interval 163-187 (VQESSSFDHHETAQSHFKHSSRKPR) is disordered. Residues 178–187 (HFKHSSRKPR) are compositionally biased toward basic residues. Residues Lys-180 and Lys-226 each participate in a glycyl lysine isopeptide (Lys-Gly) (interchain with G-Cter in SUMO2) cross-link. One can recognise a KRAB domain in the interval 225–304 (VKIEDMAVSL…QKEFGEKREQ (80 aa)). Polar residues predominate over residues 260–275 (NVFSQGSENRNGNEST). The interval 260–372 (NVFSQGSENR…NTPEEAPSGA (113 aa)) is disordered. Basic and acidic residues-rich tracts occupy residues 276–286 (SKAEVKEDSTS) and 294–349 (FQKE…EKGK). Glycyl lysine isopeptide (Lys-Gly) (interchain with G-Cter in SUMO2) cross-links involve residues Lys-277, Lys-296, Lys-301, and Lys-336. Residues 355–365 (FSLSANFNNTP) show a composition bias toward polar residues. A Glycyl lysine isopeptide (Lys-Gly) (interchain with G-Cter in SUMO2) cross-link involves residue Lys-373. 6 consecutive C2H2-type zinc fingers follow at residues 375–397 (HRCDECGKCFTRSSSLIRHKIIH), 403–425 (YECNECGKAFSLNSNLVLHQRIH), 431–453 (HECNECGKAFSHSSNLILHQRIH), 459–481 (YECNECGKAFSQSSDLTKHQRIH), 487–509 (YECSECGKAFNRNSYLILHRRIH), and 515–537 (YKCTKCGKAFTRSSTLTLHHRIH). Glycyl lysine isopeptide (Lys-Gly) (interchain with G-Cter in SUMO2) cross-links involve residues Lys-410, Lys-438, and Lys-476. Lys-558 participates in a covalent cross-link: Glycyl lysine isopeptide (Lys-Gly) (interchain with G-Cter in SUMO2).

This sequence belongs to the krueppel C2H2-type zinc-finger protein family.

It localises to the nucleus. In terms of biological role, may be involved in transcriptional regulation. The protein is Zinc finger protein with KRAB and SCAN domains 1 (Zkscan1) of Mus musculus (Mouse).